A 739-amino-acid chain; its full sequence is Polyribonucleotide nucleotidyltransferase (739 aa).

Mg(2+) contacts are provided by Asp514 and Asp520. The region spanning 580–639 is the KH domain; that stretch reads PRIITVKIPVDKIGEVIGPKGKMINQIQEDTGADITIEDDGTIYIGAAQGSQAEAARATI. The S1 motif domain maps to 651 to 723; it reads GERYLGTVVK…SRGKLSLIPV (73 aa).

Belongs to the polyribonucleotide nucleotidyltransferase family. Requires Mg(2+) as cofactor.

The protein resides in the cytoplasm. It catalyses the reaction RNA(n+1) + phosphate = RNA(n) + a ribonucleoside 5'-diphosphate. Involved in mRNA degradation. Catalyzes the phosphorolysis of single-stranded polyribonucleotides processively in the 3'- to 5'-direction. The protein is Polyribonucleotide nucleotidyltransferase of Streptomyces coelicolor (strain ATCC BAA-471 / A3(2) / M145).